The primary structure comprises 122 residues: Pollen allergen Phl p 2 (122 aa).

Positions M1–C26 are cleaved as a signal peptide. The Expansin-like CBD domain maps to K41–P120.

It belongs to the expansin family. Expansin B subfamily. As to expression, pollen specific.

The protein localises to the secreted. This is Pollen allergen Phl p 2 (PHLPII) from Phleum pratense (Common timothy).